A 75-amino-acid polypeptide reads, in one-letter code: UPF0270 protein PFL_4336 (75 aa).

This sequence belongs to the UPF0270 family.

This chain is UPF0270 protein PFL_4336, found in Pseudomonas fluorescens (strain ATCC BAA-477 / NRRL B-23932 / Pf-5).